Here is a 249-residue protein sequence, read N- to C-terminus: Tegument protein UL51 homolog (249 aa).

Belongs to the herpesviridae UL51 family. Oligomerizes. Interacts with MDV019; this interaction mediates MDV019 incorporation to virions. In terms of processing, phosphorylated.

It is found in the virion tegument. The protein resides in the host cytoplasm. Its subcellular location is the host Golgi apparatus. In terms of biological role, plays several roles during the time course of infection, including egress of virus particles from the perinuclear space and secondary envelopment of cytoplasmic capsids that bud into specific trans-Golgi network (TGN)-derived membranes. The sequence is that of Tegument protein UL51 homolog (MDV065) from Gallus gallus (Chicken).